The primary structure comprises 331 residues: Cathepsin S (331 aa).

The first 16 residues, methionine 1–alanine 16, serve as a signal peptide directing secretion. A propeptide spans histidine 17–lysine 114 (activation peptide). A glycan (N-linked (GlcNAc...) asparagine) is linked at asparagine 104. Cystine bridges form between cysteine 126–cysteine 224, cysteine 136–cysteine 180, cysteine 170–cysteine 213, and cysteine 272–cysteine 320. Cysteine 139 is an active-site residue. Active-site residues include histidine 278 and asparagine 298.

It belongs to the peptidase C1 family. As to quaternary structure, monomer.

Its subcellular location is the lysosome. The protein resides in the secreted. It is found in the cytoplasmic vesicle. The protein localises to the phagosome. It carries out the reaction Similar to cathepsin L, but with much less activity on Z-Phe-Arg-|-NHMec, and more activity on the Z-Val-Val-Arg-|-Xaa compound.. Functionally, thiol protease. Key protease responsible for the removal of the invariant chain from MHC class II molecules and MHC class II antigen presentation. The bond-specificity of this proteinase is in part similar to the specificities of cathepsin L. This Bos taurus (Bovine) protein is Cathepsin S (CTSS).